A 415-amino-acid chain; its full sequence is Serine/threonine transporter SstT (415 aa).

A run of 8 helical transmembrane segments spans residues 15–35, 45–65, 85–105, 142–162, 193–213, 217–237, 301–321, and 331–351; these read GSLV…AWLA, LGTL…WILV, ILYI…SFIF, ALLN…GIAL, VGIF…ALLG, LLVV…PLIV, GAAV…GIPV, and VVSA…LLLI.

The protein belongs to the dicarboxylate/amino acid:cation symporter (DAACS) (TC 2.A.23) family.

It is found in the cell inner membrane. It catalyses the reaction L-serine(in) + Na(+)(in) = L-serine(out) + Na(+)(out). It carries out the reaction L-threonine(in) + Na(+)(in) = L-threonine(out) + Na(+)(out). Functionally, involved in the import of serine and threonine into the cell, with the concomitant import of sodium (symport system). This Photorhabdus laumondii subsp. laumondii (strain DSM 15139 / CIP 105565 / TT01) (Photorhabdus luminescens subsp. laumondii) protein is Serine/threonine transporter SstT.